Here is a 488-residue protein sequence, read N- to C-terminus: Cobyric acid synthase (488 aa).

The 191-residue stretch at 252 to 442 folds into the GATase cobBQ-type domain; it reads RTRICVPILP…VHGLFASDAF (191 aa). The active-site Nucleophile is the C334. H434 is a catalytic residue.

It belongs to the CobB/CobQ family. CobQ subfamily.

It participates in cofactor biosynthesis; adenosylcobalamin biosynthesis. Catalyzes amidations at positions B, D, E, and G on adenosylcobyrinic A,C-diamide. NH(2) groups are provided by glutamine, and one molecule of ATP is hydrogenolyzed for each amidation. This Xanthobacter autotrophicus (strain ATCC BAA-1158 / Py2) protein is Cobyric acid synthase.